The primary structure comprises 315 residues: tRNA dimethylallyltransferase (315 aa).

An ATP-binding site is contributed by 10 to 17; sequence GPTAVGKT. Substrate is bound at residue 12–17; the sequence is TAVGKT. An interaction with substrate tRNA region spans residues 35–38; sequence DSMQ.

This sequence belongs to the IPP transferase family. In terms of assembly, monomer. It depends on Mg(2+) as a cofactor.

The enzyme catalyses adenosine(37) in tRNA + dimethylallyl diphosphate = N(6)-dimethylallyladenosine(37) in tRNA + diphosphate. In terms of biological role, catalyzes the transfer of a dimethylallyl group onto the adenine at position 37 in tRNAs that read codons beginning with uridine, leading to the formation of N6-(dimethylallyl)adenosine (i(6)A). The polypeptide is tRNA dimethylallyltransferase (Geobacillus kaustophilus (strain HTA426)).